Here is a 352-residue protein sequence, read N- to C-terminus: Endophilin-A1 (352 aa).

Positions 1 to 21 (MSVAGLKKQFHKATQKVSEKV) are membrane-binding amphipathic helix. The interval 1 to 27 (MSVAGLKKQFHKATQKVSEKVGGAEGT) is disordered. The interval 1 to 125 (MSVAGLKKQF…EVGEAMRELS (125 aa)) is binds and tubulates liposomes. Residues 18–249 (SEKVGGAEGT…LEERIRQASS (232 aa)) form the BAR domain. A required for dimerization upon membrane association region spans residues 60-87 (PNPASRAKLSMINTMSKIRGQEKGPGYP). A coiled-coil region spans residues 181–248 (EELRQALEKF…RLEERIRQAS (68 aa)). Residues 245-257 (RQASSQPRREYQP) are compositionally biased toward basic and acidic residues. Positions 245 to 289 (RQASSQPRREYQPKPRMSLEFPTGDSTQPNGGLSHTGTPKPSGVQ) are disordered. Phosphoserine is present on Ser262. The span at 268–283 (GDSTQPNGGLSHTGTP) shows a compositional bias: polar residues. An SH3 domain is found at 290–349 (MDQPCCRALYDFEPENEGELGFKEGDIITLTNQIDENWYEGMLHGHSGFFPINYVEILVA). Position 299 is a phosphotyrosine (Tyr299).

This sequence belongs to the endophilin family. In terms of assembly, monomer; in cytoplasm. Homodimer; when associated with membranes. Interacts with OPHN1. Interacts with SYNJ1. Interacts with DNM1. Interacts with MAP4K3; the interaction appears to regulate MAP4K3-mediated JNK activation. Interacts with PDCD6IP. Interacts with ATXN2. Interacts with ADAM9 and ADAM15 cytoplasmic tails. Interacts with BIN2. Interacts with TMEM108. Interacts with ADGRB2. As to expression, brain, mostly in frontal cortex. Expressed at high level in fetal cerebellum.

The protein resides in the cytoplasm. The protein localises to the membrane. Its subcellular location is the early endosome. It localises to the presynapse. In terms of biological role, implicated in synaptic vesicle endocytosis. May recruit other proteins to membranes with high curvature. Required for BDNF-dependent dendrite outgrowth. Cooperates with SH3GL2 to mediate BDNF-NTRK2 early endocytic trafficking and signaling from early endosomes. The sequence is that of Endophilin-A1 (SH3GL2) from Homo sapiens (Human).